The sequence spans 55 residues: uncharacterized protein (55 aa).

The segment covering 1 to 15 has biased composition (polar residues); it reads MVGQEQLESSPLCQH. The segment at 1–26 is disordered; that stretch reads MVGQEQLESSPLCQHSDNETETKREC. A compositionally biased stretch (basic and acidic residues) spans 16–26; sequence SDNETETKREC.

This is an uncharacterized protein from Escherichia coli (strain K12).